The sequence spans 720 residues: Chloroplastic group IIA intron splicing facilitator CRS1, chloroplastic (720 aa).

A chloroplast-targeting transit peptide spans Met-1–Ser-77. Residues Lys-131 to Glu-159 adopt a coiled-coil conformation. 2 consecutive CRM domains span residues Leu-205 to Asp-301 and Ala-359 to Asp-456. 2 coiled-coil regions span residues Lys-447–Glu-477 and Arg-517–Leu-553. Residues Glu-570–Leu-670 enclose the CRM 3 domain.

In terms of assembly, homodimer. Interacts with RNA. Part of large ribonucleo-protein complexes that include group IIA introns and CRS1.

It localises to the plastid. The protein localises to the chloroplast stroma. Required for the splicing of group IIA introns in chloroplasts, by regulating the intron folding. Forms splicing particles with RNA. May also be involved in chloroplast protein translation. In Arabidopsis thaliana (Mouse-ear cress), this protein is Chloroplastic group IIA intron splicing facilitator CRS1, chloroplastic.